A 295-amino-acid chain; its full sequence is Bifunctional protein FolD (295 aa).

NADP(+) is bound by residues G166 to S168, S191, and I232.

It belongs to the tetrahydrofolate dehydrogenase/cyclohydrolase family. As to quaternary structure, homodimer.

It carries out the reaction (6R)-5,10-methylene-5,6,7,8-tetrahydrofolate + NADP(+) = (6R)-5,10-methenyltetrahydrofolate + NADPH. It catalyses the reaction (6R)-5,10-methenyltetrahydrofolate + H2O = (6R)-10-formyltetrahydrofolate + H(+). The protein operates within one-carbon metabolism; tetrahydrofolate interconversion. Its function is as follows. Catalyzes the oxidation of 5,10-methylenetetrahydrofolate to 5,10-methenyltetrahydrofolate and then the hydrolysis of 5,10-methenyltetrahydrofolate to 10-formyltetrahydrofolate. The polypeptide is Bifunctional protein FolD (Rhodopseudomonas palustris (strain ATCC BAA-98 / CGA009)).